The primary structure comprises 450 residues: DNA primase DnaG (450 aa).

The Toprim domain occupies 199–273; that stretch reads DSIIVVEGRA…DVDYVARAPE (75 aa). Glutamate 205, aspartate 247, and aspartate 249 together coordinate Mg(2+). Basic and acidic residues predominate over residues 320 to 348; sequence APSKEVKPAPKHEPKPQPVEQKPREEKII. The segment at 320 to 350 is disordered; that stretch reads APSKEVKPAPKHEPKPQPVEQKPREEKIIRP.

This sequence belongs to the archaeal DnaG primase family. In terms of assembly, forms a ternary complex with MCM helicase and DNA. Component of the archaeal exosome complex. Mg(2+) is required as a cofactor.

The catalysed reaction is ssDNA + n NTP = ssDNA/pppN(pN)n-1 hybrid + (n-1) diphosphate.. RNA polymerase that catalyzes the synthesis of short RNA molecules used as primers for DNA polymerase during DNA replication. Also part of the exosome, which is a complex involved in RNA degradation. Acts as a poly(A)-binding protein that enhances the interaction between heteromeric, adenine-rich transcripts and the exosome. The protein is DNA primase DnaG of Thermococcus gammatolerans (strain DSM 15229 / JCM 11827 / EJ3).